Reading from the N-terminus, the 285-residue chain is 2-dehydro-3-deoxyphosphooctonate aldolase (285 aa).

Belongs to the KdsA family.

It localises to the cytoplasm. The enzyme catalyses D-arabinose 5-phosphate + phosphoenolpyruvate + H2O = 3-deoxy-alpha-D-manno-2-octulosonate-8-phosphate + phosphate. The protein operates within carbohydrate biosynthesis; 3-deoxy-D-manno-octulosonate biosynthesis; 3-deoxy-D-manno-octulosonate from D-ribulose 5-phosphate: step 2/3. It functions in the pathway bacterial outer membrane biogenesis; lipopolysaccharide biosynthesis. The polypeptide is 2-dehydro-3-deoxyphosphooctonate aldolase (Paracidovorax citrulli (strain AAC00-1) (Acidovorax citrulli)).